A 701-amino-acid chain; its full sequence is MARTTPIERYRNIGISAHIDAGKTTTTERVLFYTGVSHKIGEVHDGAATMDWMEQEQERGITITSAATTAFWSGMGKQFQPHRINIIDTPGHVDFTIEVERSMRVLDGAVMVYCAVGGVQPQSETVWRQANKYKVPRIAFVNKMDRTGANYLRCVEHIKTRLKGTPVPLQLNIGSEENFKGVIDLVKMKAINWSEADQGVSFDYEEIPAELLEQAQEMRMSLVEAAAEASEDLMEKYLGGEELTEEEIKKALRLRVLNNEIILVTCGSAFKNKGVQAMLDAVVDYLPAPTDVAAIDGLKLDGVTKDERHASDDEPFAALAFKIATDPFVGNLTFFRVYSGVVNSGDSVLNSVKEKRERFGRIVQMHANKREEIKEVRAGDIAAAIGLKDVTTGDTLCDEKSPIILERMEFPEPVISIAVEPKTKADQEKMGLALGRLAQEDPSFRVWTDEESGQTIIAGMGELHLDIIVDRMRREFKVEANVGKPQVAYRETIRETVKDVEGKHAKQSGGRGQYGHVVIDMYPLEAGKAYEFVNDIKGGVIPGEYIPGVDKGIREQLKSGPLAGYPVMDLGVRLHFGSYHDVDSSELAFKIAASMAFKSGYMKANPVLLEPIMKVEVETPEDYMGDVIGDLNRRRGLIEGMEDGPSGKIVRALVPLAEMFGYATALRSATQGRASYAMEFAKYSDAPNNVAQAVIEERKSK.

The tr-type G domain occupies 8-290 (ERYRNIGISA…AVVDYLPAPT (283 aa)). GTP is bound by residues 17-24 (AHIDAGKT), 88-92 (DTPGH), and 142-145 (NKMD).

It belongs to the TRAFAC class translation factor GTPase superfamily. Classic translation factor GTPase family. EF-G/EF-2 subfamily.

The protein localises to the cytoplasm. In terms of biological role, catalyzes the GTP-dependent ribosomal translocation step during translation elongation. During this step, the ribosome changes from the pre-translocational (PRE) to the post-translocational (POST) state as the newly formed A-site-bound peptidyl-tRNA and P-site-bound deacylated tRNA move to the P and E sites, respectively. Catalyzes the coordinated movement of the two tRNA molecules, the mRNA and conformational changes in the ribosome. The chain is Elongation factor G from Aeromonas salmonicida (strain A449).